Consider the following 338-residue polypeptide: Glyceraldehyde-3-phosphate dehydrogenase (338 aa).

Residues Arg13, Ile14, Asp35, Arg80, and Ser123 each coordinate NAD(+). Ser152, Cys153, Thr154, Thr183, Arg198, Thr212, Gly213, and Arg235 together coordinate D-glyceraldehyde 3-phosphate. The active-site Nucleophile is Cys153. Position 317 (Asn317) interacts with NAD(+).

It belongs to the glyceraldehyde-3-phosphate dehydrogenase family. As to quaternary structure, homotetramer.

It is found in the tegument membrane. The enzyme catalyses D-glyceraldehyde 3-phosphate + phosphate + NAD(+) = (2R)-3-phospho-glyceroyl phosphate + NADH + H(+). The protein operates within carbohydrate degradation; glycolysis; pyruvate from D-glyceraldehyde 3-phosphate: step 1/5. Its function is as follows. This antigen is associated with human resistance to schistosomiasis. This is Glyceraldehyde-3-phosphate dehydrogenase from Schistosoma mansoni (Blood fluke).